Consider the following 342-residue polypeptide: Nicotinate-nucleotide--dimethylbenzimidazole phosphoribosyltransferase (342 aa).

The Proton acceptor role is filled by E311.

Belongs to the CobT family.

The catalysed reaction is 5,6-dimethylbenzimidazole + nicotinate beta-D-ribonucleotide = alpha-ribazole 5'-phosphate + nicotinate + H(+). It functions in the pathway nucleoside biosynthesis; alpha-ribazole biosynthesis; alpha-ribazole from 5,6-dimethylbenzimidazole: step 1/2. Functionally, catalyzes the synthesis of alpha-ribazole-5'-phosphate from nicotinate mononucleotide (NAMN) and 5,6-dimethylbenzimidazole (DMB). In Vibrio vulnificus (strain CMCP6), this protein is Nicotinate-nucleotide--dimethylbenzimidazole phosphoribosyltransferase.